A 333-amino-acid polypeptide reads, in one-letter code: Phosphate acyltransferase (333 aa).

Belongs to the PlsX family. In terms of assembly, homodimer. Probably interacts with PlsY.

The protein resides in the cytoplasm. It carries out the reaction a fatty acyl-[ACP] + phosphate = an acyl phosphate + holo-[ACP]. It participates in lipid metabolism; phospholipid metabolism. Its function is as follows. Catalyzes the reversible formation of acyl-phosphate (acyl-PO(4)) from acyl-[acyl-carrier-protein] (acyl-ACP). This enzyme utilizes acyl-ACP as fatty acyl donor, but not acyl-CoA. This chain is Phosphate acyltransferase, found in Pelagibacter ubique (strain HTCC1062).